Reading from the N-terminus, the 656-residue chain is Protein teflon (656 aa).

The segment at 33–56 adopts a C2H2-type 1 zinc-finger fold; the sequence is LYCHFCRDLFTQLPEFLRHLQSNH. Residues 80–131 form a disordered region; it reads DKAHEDAQSAGHNSSSGDSRSLMNSEDSRAIDGSEENSDNSPVKPEQIGKQN. The segment covering 89–104 has biased composition (polar residues); that stretch reads AGHNSSSGDSRSLMNS. 2 consecutive C2H2-type zinc fingers follow at residues 606–628 and 632–655; these read YFCK…LISH and FQCT…RNAH.

Belongs to the Teflon family.

It is found in the nucleus. It localises to the chromosome. In terms of biological role, specifically required in males for proper segregation of autosomal bivalents at meiosis I. Expression is required in the male germ line prior to spermatocyte stage S4. May have a role as a bridging molecule maintaining adhesion to hold autosome bivalents together via heterochromatic connections. This chain is Protein teflon, found in Drosophila sechellia (Fruit fly).